The chain runs to 1503 residues: Rho GTPase-activating protein 5 (1503 aa).

4 consecutive FF domains span residues 267 to 325 (QLVV…HIEQ), 366 to 420 (KLME…HVQH), 427 to 481 (RIEM…HQRE), and 482 to 548 (IVEK…HIGF). Tyr550 bears the 3'-nitrotyrosine mark. Ser590 and Ser765 each carry phosphoserine. The pG1 pseudoGTPase domain occupies 590-763 (STNIDKVNLF…LESVKHNLDV (174 aa)). One can recognise a pG2 pseudoGTPase domain in the interval 779 to 944 (RIVMCAMCGD…FSDVLEKKNM (166 aa)). A phosphoserine mark is found at Ser951 and Ser968. Disordered stretches follow at residues 975–1004 (YNNYPDSDDDTEAPPPYSPIGDDVQLLPTP), 1022–1050 (HSTPNCHDHERNHKVPPPIKPKPVVPKTN), and 1069–1091 (NPRKQTSRVPLAHPEDMDSSDNY). The span at 1036-1045 (VPPPIKPKPV) shows a compositional bias: pro residues. Ser1115 is subject to Phosphoserine. Disordered regions lie at residues 1129-1157 (NTQGDEENGFSDRTSKGHGERRPSKYKYK) and 1169-1255 (YRRT…TRRN). Over residues 1141 to 1151 (RTSKGHGERRP) the composition is skewed to basic and acidic residues. A phosphoserine mark is found at Ser1196, Ser1203, and Ser1219. A Rho-GAP domain is found at 1263-1450 (MPLQDLVTAE…TFIQQCQFFF (188 aa)).

In terms of assembly, may interact with RASA1/p120GAP. Expressed in spinal cord, cerebellum, kidney, testis and lung.

Its subcellular location is the cytoplasm. The protein localises to the cell membrane. Its function is as follows. GTPase-activating protein for Rho family members. This Mus musculus (Mouse) protein is Rho GTPase-activating protein 5 (Arhgap5).